A 159-amino-acid chain; its full sequence is ATP synthase subunit b (159 aa).

A helical transmembrane segment spans residues 8 to 28 (ILATIINFIILILILKHFFWD).

This sequence belongs to the ATPase B chain family. F-type ATPases have 2 components, F(1) - the catalytic core - and F(0) - the membrane proton channel. F(1) has five subunits: alpha(3), beta(3), gamma(1), delta(1), epsilon(1). F(0) has three main subunits: a(1), b(2) and c(10-14). The alpha and beta chains form an alternating ring which encloses part of the gamma chain. F(1) is attached to F(0) by a central stalk formed by the gamma and epsilon chains, while a peripheral stalk is formed by the delta and b chains.

The protein localises to the cell membrane. Its function is as follows. F(1)F(0) ATP synthase produces ATP from ADP in the presence of a proton or sodium gradient. F-type ATPases consist of two structural domains, F(1) containing the extramembraneous catalytic core and F(0) containing the membrane proton channel, linked together by a central stalk and a peripheral stalk. During catalysis, ATP synthesis in the catalytic domain of F(1) is coupled via a rotary mechanism of the central stalk subunits to proton translocation. Functionally, component of the F(0) channel, it forms part of the peripheral stalk, linking F(1) to F(0). The chain is ATP synthase subunit b from Clostridium perfringens (strain SM101 / Type A).